We begin with the raw amino-acid sequence, 627 residues long: (R)-linalool synthase 1, chloroplastic (627 aa).

A chloroplast-targeting transit peptide spans 1–21 (MAFVSIAPLASRCCVHKSFVS). Residues Asp-378, Asp-382, and Glu-530 each contribute to the Mg(2+) site. Positions 378 to 382 (DDIYD) match the DDXXD motif motif.

This sequence belongs to the terpene synthase family. Tpsd subfamily. The cofactor is Mg(2+). It depends on Mn(2+) as a cofactor.

The protein resides in the plastid. Its subcellular location is the chloroplast. The catalysed reaction is (2E)-geranyl diphosphate + H2O = (R)-linalool + diphosphate. It participates in terpene metabolism; oleoresin biosynthesis. Terpene synthase (TPS) involved in the biosynthesis of monoterpene natural products included in conifer oleoresin secretions and volatile emissions; these compounds contribute to biotic and abiotic stress defense against herbivores and pathogens. Catalyzes the conversion of (2E)-geranyl diphosphate (GPP) to (R)-linalool. In Picea sitchensis (Sitka spruce), this protein is (R)-linalool synthase 1, chloroplastic.